A 419-amino-acid polypeptide reads, in one-letter code: Gamma-glutamyl phosphate reductase (419 aa).

Belongs to the gamma-glutamyl phosphate reductase family.

It is found in the cytoplasm. It carries out the reaction L-glutamate 5-semialdehyde + phosphate + NADP(+) = L-glutamyl 5-phosphate + NADPH + H(+). It participates in amino-acid biosynthesis; L-proline biosynthesis; L-glutamate 5-semialdehyde from L-glutamate: step 2/2. In terms of biological role, catalyzes the NADPH-dependent reduction of L-glutamate 5-phosphate into L-glutamate 5-semialdehyde and phosphate. The product spontaneously undergoes cyclization to form 1-pyrroline-5-carboxylate. The polypeptide is Gamma-glutamyl phosphate reductase (Nitratidesulfovibrio vulgaris (strain ATCC 29579 / DSM 644 / CCUG 34227 / NCIMB 8303 / VKM B-1760 / Hildenborough) (Desulfovibrio vulgaris)).